Here is a 443-residue protein sequence, read N- to C-terminus: Xaa-Pro dipeptidase (443 aa).

Mn(2+)-binding residues include Asp-241, Asp-252, His-333, Glu-378, and Glu-417.

It belongs to the peptidase M24B family. Bacterial-type prolidase subfamily. The cofactor is Mn(2+).

The catalysed reaction is Xaa-L-Pro dipeptide + H2O = an L-alpha-amino acid + L-proline. Functionally, splits dipeptides with a prolyl residue in the C-terminal position. The protein is Xaa-Pro dipeptidase of Actinobacillus pleuropneumoniae serotype 5b (strain L20).